Consider the following 300-residue polypeptide: Mitochondrial GTP/GDP carrier protein 1 (300 aa).

Solcar repeat units lie at residues 8-108 (QSGL…KKDF), 117-198 (GKAM…AKEY), and 208-293 (ATWS…LIPR). 6 helical membrane-spanning segments follow: residues 14-34 (LLGS…VDTI), 85-101 (QRVY…EFLN), 122-142 (SAAA…LDVL), 173-189 (GWGW…FALF), 214-234 (FISS…LDVI), and 268-285 (GLTP…FSFA).

Belongs to the mitochondrial carrier (TC 2.A.29) family.

It localises to the mitochondrion inner membrane. Functionally, mitochondrial GTP/GDP transporter required for GTP uptake and GDP exit from mitochondria. Involved in mitochondrial iron transport and essential for mitochondrial genome maintenance. This Saccharomyces cerevisiae (strain ATCC 204508 / S288c) (Baker's yeast) protein is Mitochondrial GTP/GDP carrier protein 1 (GGC1).